The primary structure comprises 379 residues: Alkanesulfonate monooxygenase (379 aa).

The protein belongs to the SsuD family.

The catalysed reaction is an alkanesulfonate + FMNH2 + O2 = an aldehyde + FMN + sulfite + H2O + 2 H(+). Functionally, catalyzes the desulfonation of aliphatic sulfonates. The protein is Alkanesulfonate monooxygenase of Pseudomonas syringae pv. syringae (strain B728a).